The sequence spans 89 residues: Small ribosomal subunit protein uS15 (89 aa).

Belongs to the universal ribosomal protein uS15 family. As to quaternary structure, part of the 30S ribosomal subunit. Forms a bridge to the 50S subunit in the 70S ribosome, contacting the 23S rRNA.

Its function is as follows. One of the primary rRNA binding proteins, it binds directly to 16S rRNA where it helps nucleate assembly of the platform of the 30S subunit by binding and bridging several RNA helices of the 16S rRNA. Forms an intersubunit bridge (bridge B4) with the 23S rRNA of the 50S subunit in the ribosome. The polypeptide is Small ribosomal subunit protein uS15 (Buchnera aphidicola subsp. Baizongia pistaciae (strain Bp)).